A 982-amino-acid polypeptide reads, in one-letter code: Filament-like plant protein 4 (982 aa).

Coiled-coil stretches lie at residues 39-83 (DQYT…VAKE) and 125-291 (EDRA…RKKL). The disordered stretch occupies residues 311 to 333 (DHRQDHRQRRSPVRPSSPLMSPM). Residues 323–333 (VRPSSPLMSPM) show a composition bias toward low complexity. Positions 345–401 (DNMQKFHKENDLLTERLLAMEEETKMLKEALAKRNSELQVSRNLCAKTANRLQTLEA) form a coiled coil. Polar residues predominate over residues 423-433 (QNASNPPSMAS). 2 disordered regions span residues 423 to 466 (QNAS…AKIK) and 687 to 711 (QKDS…PDDC). Residues 452–475 (ELSQSNKDKANAKIKKTESANQLE) are a coiled coil. Positions 457 to 466 (NKDKANAKIK) are enriched in basic and acidic residues. The segment covering 693–705 (EHYQNGCSQSSDS) has biased composition (polar residues). Residues 722 to 885 (ATCKFTTEEF…AECQETILLL (164 aa)) adopt a coiled-coil conformation. Polar residues-rich tracts occupy residues 896–910 (TEQV…QQAL) and 918–943 (ATST…NTMK). A disordered region spans residues 896 to 982 (TEQVASSPSQ…FSRFFSTKAK (87 aa)).

The protein belongs to the FPP family. Interacts with WPP/MAF proteins.

This is Filament-like plant protein 4 (FPP4) from Arabidopsis thaliana (Mouse-ear cress).